A 29-amino-acid chain; its full sequence is Cyclotide mden-B (29 aa).

Positions 1–29 (GLPICGETCFTGKCYTPGCTCSYPICKKN) form a cross-link, cyclopeptide (Gly-Asn). 3 disulfides stabilise this stretch: C5–C19, C9–C21, and C14–C26.

The protein belongs to the cyclotide family. Moebius subfamily. This is a cyclic peptide.

Probably participates in a plant defense mechanism. The sequence is that of Cyclotide mden-B from Melicytus dentatus (Tree violet).